The following is a 373-amino-acid chain: Lipoyl synthase (373 aa).

The disordered stretch occupies residues histidine 12–isoleucine 36. Cysteine 81, cysteine 86, cysteine 92, cysteine 107, cysteine 111, cysteine 114, and serine 323 together coordinate [4Fe-4S] cluster. The Radical SAM core domain maps to phenylalanine 93–serine 312. The disordered stretch occupies residues proline 346–arginine 373. Positions alanine 360–arginine 373 are enriched in polar residues.

Belongs to the radical SAM superfamily. Lipoyl synthase family. It depends on [4Fe-4S] cluster as a cofactor.

The protein resides in the cytoplasm. It carries out the reaction [[Fe-S] cluster scaffold protein carrying a second [4Fe-4S](2+) cluster] + N(6)-octanoyl-L-lysyl-[protein] + 2 oxidized [2Fe-2S]-[ferredoxin] + 2 S-adenosyl-L-methionine + 4 H(+) = [[Fe-S] cluster scaffold protein] + N(6)-[(R)-dihydrolipoyl]-L-lysyl-[protein] + 4 Fe(3+) + 2 hydrogen sulfide + 2 5'-deoxyadenosine + 2 L-methionine + 2 reduced [2Fe-2S]-[ferredoxin]. It participates in protein modification; protein lipoylation via endogenous pathway; protein N(6)-(lipoyl)lysine from octanoyl-[acyl-carrier-protein]: step 2/2. Functionally, catalyzes the radical-mediated insertion of two sulfur atoms into the C-6 and C-8 positions of the octanoyl moiety bound to the lipoyl domains of lipoate-dependent enzymes, thereby converting the octanoylated domains into lipoylated derivatives. This chain is Lipoyl synthase, found in Xylella fastidiosa (strain M12).